We begin with the raw amino-acid sequence, 698 residues long: Sucrose non-fermenting protein kinase 1 (698 aa).

The tract at residues Met-1–Pro-48 is disordered. The Protein kinase domain maps to Tyr-62–Phe-313. ATP-binding positions include Leu-68–Val-76 and Lys-91. The active-site Proton acceptor is Asp-184. Positions Tyr-320–Pro-417 are auto-inhibitory domain (AID). Residues Val-360–Asn-397 form the UBA domain. 3 disordered regions span residues Leu-410–Ala-435, Thr-482–Lys-525, and Glu-564–Met-597. The segment covering Ser-415 to Ala-435 has biased composition (low complexity). Composition is skewed to basic and acidic residues over residues Thr-484–Arg-493 and Glu-564–Glu-573.

Belongs to the protein kinase superfamily. CAMK Ser/Thr protein kinase family. SNF1 subfamily. In terms of assembly, component of the AMP-activated protein kinase complex also known as the SNF1 kinase complex (Snf1c), a heterotrimeric complex composed of a catalytic subunit alpha and 2 regulatory subunits beta and gamma.

The protein localises to the cytoplasm. The protein resides in the nucleus. It carries out the reaction L-seryl-[protein] + ATP = O-phospho-L-seryl-[protein] + ADP + H(+). The catalysed reaction is L-threonyl-[protein] + ATP = O-phospho-L-threonyl-[protein] + ADP + H(+). Catalytic subunit of the AMP-activated protein kinase complex also known as the SNF1 kinase complex (Snf1c), a central regulator of cellular energy homeostasis, which, in response to a fall in intracellular ATP levels, activates energy-producing pathways and inhibits energy-consuming processes. The complex phosphorylates histone H3 to form H3S10ph, which promotes H3K14ac formation, leading to transcriptional activation through TBP recruitment to the promoters. Activates the expression of the galactose oxidase (GOA) gene and of several cell wall-degrading enzymes (CWDEs) such as pectate lyase, xylanase and glucanase. Plays an important role in sudden death syndrome (SDS) by controlling the colonization of the infected roots. The chain is Sucrose non-fermenting protein kinase 1 from Fusarium virguliforme.